Reading from the N-terminus, the 448-residue chain is Cytoplasmic tRNA 2-thiolation protein 2 (448 aa).

It belongs to the CTU2/NCS2 family.

Its subcellular location is the cytoplasm. It participates in tRNA modification; 5-methoxycarbonylmethyl-2-thiouridine-tRNA biosynthesis. Functionally, plays a central role in 2-thiolation of mcm(5)S(2)U at tRNA wobble positions of tRNA(Lys), tRNA(Glu) and tRNA(Gln). May act by forming a heterodimer with NCS6 that ligates sulfur from thiocarboxylated URM1 onto the uridine of tRNAs at wobble position. Prior mcm(5) tRNA modification by the elongator complex is required for 2-thiolation. May also be involved in protein urmylation. The chain is Cytoplasmic tRNA 2-thiolation protein 2 from Debaryomyces hansenii (strain ATCC 36239 / CBS 767 / BCRC 21394 / JCM 1990 / NBRC 0083 / IGC 2968) (Yeast).